The primary structure comprises 97 residues: MAQLLSDIEINSQIGQLPDWSVVGQEIQMVRKFKDFIAAIDFVNKLVEPAEAAGHHPDIAISYNKVTITLTTHDAGGLTQKDFDLAQVISQLSRIWV.

Belongs to the pterin-4-alpha-carbinolamine dehydratase family.

It catalyses the reaction (4aS,6R)-4a-hydroxy-L-erythro-5,6,7,8-tetrahydrobiopterin = (6R)-L-erythro-6,7-dihydrobiopterin + H2O. The sequence is that of Putative pterin-4-alpha-carbinolamine dehydratase from Cyanothece sp. (strain PCC 7425 / ATCC 29141).